The primary structure comprises 44 residues: Protein PsbN (44 aa).

The helical transmembrane segment at 6-26 threads the bilayer; it reads FFFSLFVWCLLLSITAYSLYV.

It belongs to the PsbN family.

It localises to the plastid. The protein resides in the chloroplast thylakoid membrane. Its function is as follows. May play a role in photosystem I and II biogenesis. The chain is Protein PsbN from Tupiella akineta (Green alga).